Reading from the N-terminus, the 276-residue chain is Shikimate dehydrogenase (NADP(+)) (276 aa).

Shikimate-binding positions include 15–17 (SLS) and T62. Catalysis depends on K66, which acts as the Proton acceptor. Residue E78 coordinates NADP(+). N87 and D102 together coordinate shikimate. NADP(+) is bound by residues 151–156 (NRTVEK) and I218. Y220 provides a ligand contact to shikimate. G241 serves as a coordination point for NADP(+).

It belongs to the shikimate dehydrogenase family. As to quaternary structure, homodimer.

The catalysed reaction is shikimate + NADP(+) = 3-dehydroshikimate + NADPH + H(+). Its pathway is metabolic intermediate biosynthesis; chorismate biosynthesis; chorismate from D-erythrose 4-phosphate and phosphoenolpyruvate: step 4/7. Involved in the biosynthesis of the chorismate, which leads to the biosynthesis of aromatic amino acids. Catalyzes the reversible NADPH linked reduction of 3-dehydroshikimate (DHSA) to yield shikimate (SA). This is Shikimate dehydrogenase (NADP(+)) from Geobacillus kaustophilus (strain HTA426).